The chain runs to 33 residues: Gastrin (33 aa).

Residue Gln1 is modified to Pyrrolidone carboxylic acid. The residue at position 28 (Tyr28) is a Sulfotyrosine. Position 33 is a phenylalanine amide (Phe33).

It belongs to the gastrin/cholecystokinin family. In terms of processing, sulfation enhances proteolytic processing, and blocks peptide degradation. Levels of sulfation differ between proteolytically-cleaved gastrins and between tissues.

It is found in the secreted. Gastrin stimulates the stomach mucosa to produce and secrete hydrochloric acid and the pancreas to secrete its digestive enzymes. It also stimulates smooth muscle contraction and increases blood circulation and water secretion in the stomach and intestine. The protein is Gastrin (GAST) of Macropus giganteus (Eastern gray kangaroo).